The sequence spans 215 residues: Urease accessory protein UreG (215 aa).

GTP is bound at residue 24-31; sequence GPVGSGKT.

The protein belongs to the SIMIBI class G3E GTPase family. UreG subfamily. Homodimer. UreD, UreF and UreG form a complex that acts as a GTP-hydrolysis-dependent molecular chaperone, activating the urease apoprotein by helping to assemble the nickel containing metallocenter of UreC. The UreE protein probably delivers the nickel.

The protein localises to the cytoplasm. Functionally, facilitates the functional incorporation of the urease nickel metallocenter. This process requires GTP hydrolysis, probably effectuated by UreG. The sequence is that of Urease accessory protein UreG from Burkholderia cenocepacia (strain HI2424).